The following is a 334-amino-acid chain: S-adenosylmethionine decarboxylase proenzyme (334 aa).

Phe-7 is a substrate binding site. Residues Glu-8 and Glu-11 contribute to the active site. A substrate-binding site is contributed by Glu-67. Ser-68 (schiff-base intermediate with substrate; via pyruvic acid) is an active-site residue. Pyruvic acid (Ser); by autocatalysis is present on Ser-68. Cys-82 functions as the Proton donor; for catalytic activity in the catalytic mechanism. Residue Phe-223 coordinates substrate. Catalysis depends on proton acceptor; for processing activity residues Ser-229 and His-243. Glu-247 provides a ligand contact to substrate. Ser-298 bears the Phosphoserine mark.

Belongs to the eukaryotic AdoMetDC family. Heterotetramer of two alpha and two beta chains. Pyruvate is required as a cofactor. In terms of processing, is synthesized initially as an inactive proenzyme. Formation of the active enzyme involves a self-maturation process in which the active site pyruvoyl group is generated from an internal serine residue via an autocatalytic post-translational modification. Two non-identical subunits are generated from the proenzyme in this reaction, and the pyruvate is formed at the N-terminus of the alpha chain, which is derived from the carboxyl end of the proenzyme. The post-translation cleavage follows an unusual pathway, termed non-hydrolytic serinolysis, in which the side chain hydroxyl group of the serine supplies its oxygen atom to form the C-terminus of the beta chain, while the remainder of the serine residue undergoes an oxidative deamination to produce ammonia and the pyruvoyl group blocking the N-terminus of the alpha chain.

It catalyses the reaction S-adenosyl-L-methionine + H(+) = S-adenosyl 3-(methylsulfanyl)propylamine + CO2. Its pathway is amine and polyamine biosynthesis; S-adenosylmethioninamine biosynthesis; S-adenosylmethioninamine from S-adenosyl-L-methionine: step 1/1. Functionally, essential for biosynthesis of the polyamines spermidine and spermine. Promotes maintenance and self-renewal of embryonic stem cells, by maintaining spermine levels. This chain is S-adenosylmethionine decarboxylase proenzyme (AMD1), found in Mesocricetus auratus (Golden hamster).